The chain runs to 179 residues: uncharacterized protein (179 aa).

Its subcellular location is the virion. This is an uncharacterized protein from Acanthamoeba polyphaga (Amoeba).